We begin with the raw amino-acid sequence, 196 residues long: RNA pyrophosphohydrolase (196 aa).

Residues 6–149 enclose the Nudix hydrolase domain; the sequence is GYRPNVGIVI…KRDVYRKVMK (144 aa). The short motif at 38 to 59 is the Nudix box element; that stretch reads GGINDNESAEQAMYRELHEEVG.

This sequence belongs to the Nudix hydrolase family. RppH subfamily. The cofactor is a divalent metal cation.

Functionally, accelerates the degradation of transcripts by removing pyrophosphate from the 5'-end of triphosphorylated RNA, leading to a more labile monophosphorylated state that can stimulate subsequent ribonuclease cleavage. The protein is RNA pyrophosphohydrolase of Haemophilus influenzae (strain ATCC 51907 / DSM 11121 / KW20 / Rd).